Consider the following 159-residue polypeptide: Bacterioferritin (159 aa).

The Ferritin-like diiron domain maps to 1-145 (MQGDPDVLRL…TQLELMDKLG (145 aa)). 2 residues coordinate Fe cation: glutamate 18 and glutamate 51. Methionine 52 is a binding site for heme b. Positions 54, 94, 127, and 130 each coordinate Fe cation.

Belongs to the bacterioferritin family. Homooligomer of 24 subunits, arranged as 12 dimers, that are packed together to form an approximately spherical molecule with a central cavity, in which large amounts of iron can be deposited. Heme b serves as cofactor.

It carries out the reaction 4 Fe(2+) + O2 + 4 H(+) = 4 Fe(3+) + 2 H2O. The catalysed reaction is Fe(2+)(in) = Fe(2+)(out). Functionally, iron-storage protein, whose ferroxidase center binds Fe(2+), oxidizes it using dioxygen to Fe(3+), and participates in the subsequent Fe(3+) oxide mineral core formation within the central cavity of the BFR protein shell. The polypeptide is Bacterioferritin (bfr) (Mycobacterium bovis (strain ATCC BAA-935 / AF2122/97)).